The following is a 299-amino-acid chain: 33 kDa chaperonin (299 aa).

Intrachain disulfides connect Cys-234–Cys-236 and Cys-268–Cys-271.

This sequence belongs to the HSP33 family. Post-translationally, under oxidizing conditions two disulfide bonds are formed involving the reactive cysteines. Under reducing conditions zinc is bound to the reactive cysteines and the protein is inactive.

Its subcellular location is the cytoplasm. In terms of biological role, redox regulated molecular chaperone. Protects both thermally unfolding and oxidatively damaged proteins from irreversible aggregation. Plays an important role in the bacterial defense system toward oxidative stress. The protein is 33 kDa chaperonin of Pseudomonas putida (strain GB-1).